We begin with the raw amino-acid sequence, 120 residues long: Prefoldin subunit beta (120 aa).

The protein belongs to the prefoldin subunit beta family. In terms of assembly, heterohexamer of two alpha and four beta subunits.

It is found in the cytoplasm. Functionally, molecular chaperone capable of stabilizing a range of proteins. Seems to fulfill an ATP-independent, HSP70-like function in archaeal de novo protein folding. This is Prefoldin subunit beta from Methanospirillum hungatei JF-1 (strain ATCC 27890 / DSM 864 / NBRC 100397 / JF-1).